We begin with the raw amino-acid sequence, 180 residues long: Adenine phosphoribosyltransferase (180 aa).

The protein belongs to the purine/pyrimidine phosphoribosyltransferase family. As to quaternary structure, homodimer.

Its subcellular location is the cytoplasm. It catalyses the reaction AMP + diphosphate = 5-phospho-alpha-D-ribose 1-diphosphate + adenine. It participates in purine metabolism; AMP biosynthesis via salvage pathway; AMP from adenine: step 1/1. Its function is as follows. Catalyzes a salvage reaction resulting in the formation of AMP, that is energically less costly than de novo synthesis. This chain is Adenine phosphoribosyltransferase, found in Actinobacillus succinogenes (strain ATCC 55618 / DSM 22257 / CCUG 43843 / 130Z).